A 401-amino-acid chain; its full sequence is MRNIIVEPLNQTPIEDQKVEIVERKGIGHPDSISDGIAESVSRALCNAYLDRFGAIMHHNTDEVQITAGESAPQFGGGEVIKPMEILLTGRGIAEVDGEKIGLDRIAISAAKEYLRENILNLDVETCAVVECKIGHGSGDLRDVFARKGRAPLSNDTSFGVGFAPFSETERIVMEAENLLNSPEFKKKHPAVGEDIKVMGLRENDNITLTVACAMVDRYVSDLEEYLEVKNVVRDEVFKIASKLTDRNLEVFVNTADRCEDDEPSVYITVTGTSAEMGDDGSVGRGNRANGLITPNRPMSMEATSGKNPINHVGKIYNLLSNQMAGDIVESVEGVKQVHIMILSQIGKPIDHPKAATAQVILEDGYTMDEVTGKVSGVMDAWLEDIPSITEMLVKGQLRTF.

Residue 135 to 140 (GHGSGD) coordinates ATP.

This sequence belongs to the AdoMet synthase 2 family. Mg(2+) serves as cofactor.

The catalysed reaction is L-methionine + ATP + H2O = S-adenosyl-L-methionine + phosphate + diphosphate. Its pathway is amino-acid biosynthesis; S-adenosyl-L-methionine biosynthesis; S-adenosyl-L-methionine from L-methionine: step 1/1. In terms of biological role, catalyzes the formation of S-adenosylmethionine from methionine and ATP. In Methanothermobacter thermautotrophicus (strain ATCC 29096 / DSM 1053 / JCM 10044 / NBRC 100330 / Delta H) (Methanobacterium thermoautotrophicum), this protein is S-adenosylmethionine synthase (mat).